Here is a 152-residue protein sequence, read N- to C-terminus: Small ribosomal subunit protein uS15 (152 aa).

Basic residues predominate over residues 1–10; the sequence is MAKMHTRTKG. The tract at residues 1-26 is disordered; it reads MAKMHTRTKGKSGSTKPIRSESPAWS. Polar residues predominate over residues 11–26; it reads KSGSTKPIRSESPAWS.

The protein belongs to the universal ribosomal protein uS15 family. Part of the 30S ribosomal subunit.

The sequence is that of Small ribosomal subunit protein uS15 from Methanococcoides burtonii (strain DSM 6242 / NBRC 107633 / OCM 468 / ACE-M).